We begin with the raw amino-acid sequence, 411 residues long: Gamma-glutamyl phosphate reductase (411 aa).

It belongs to the gamma-glutamyl phosphate reductase family.

The protein localises to the cytoplasm. The enzyme catalyses L-glutamate 5-semialdehyde + phosphate + NADP(+) = L-glutamyl 5-phosphate + NADPH + H(+). The protein operates within amino-acid biosynthesis; L-proline biosynthesis; L-glutamate 5-semialdehyde from L-glutamate: step 2/2. Functionally, catalyzes the NADPH-dependent reduction of L-glutamate 5-phosphate into L-glutamate 5-semialdehyde and phosphate. The product spontaneously undergoes cyclization to form 1-pyrroline-5-carboxylate. This chain is Gamma-glutamyl phosphate reductase, found in Wolinella succinogenes (strain ATCC 29543 / DSM 1740 / CCUG 13145 / JCM 31913 / LMG 7466 / NCTC 11488 / FDC 602W) (Vibrio succinogenes).